The primary structure comprises 269 residues: Serine/arginine-rich splicing factor 5 (269 aa).

Residues 4 to 74 enclose the RRM 1 domain; it reads CRVFIGRLNP…ERVTIEHARA (71 aa). Residues 73-105 are disordered; that stretch reads RARSRGGRGRGRYSDRFSSRRPRNDRRNAPPVR. The segment covering 74-83 has biased composition (basic residues); sequence ARSRGGRGRG. The residue at position 86 (Ser86) is a Phosphoserine. Positions 108–189 constitute an RRM 2 domain; that stretch reads NRLIVENLSS…SKRHRSRSRS (82 aa). N6-acetyllysine is present on Lys167. The tract at residues 174–269 is disordered; sequence IKLIEGSKRH…SRSRSVDSGN (96 aa). A compositionally biased stretch (basic residues) spans 181 to 226; that stretch reads KRHRSRSRSRSRTRSSSRSRSRSRSRRSKSYSRSRSRSRSRSKSRS. 5 positions are modified to phosphoserine: Ser224, Ser226, Ser230, Ser247, and Ser250. Residues 239-251 are compositionally biased toward low complexity; sequence RGSSSRSKSPASV.

The protein belongs to the splicing factor SR family. As to quaternary structure, found in a pre-mRNA splicing complex with SRSF4/SFRS4, SRSF5/SFRS5, SNRNP70, SNRPA1, SRRM1 and SRRM2. Interacts with RBMY; the interaction inhibits SRSF5 pre-mRNA splicing. Interacts (via RS domain) with PHF5A (via N-terminus). In terms of processing, extensively phosphorylated on serine residues in the RS domain.

Its subcellular location is the nucleus. In terms of biological role, may be required for progression through G1 and entry into S phase of cell growth. May play a regulatory role in pre-mRNA splicing. Autoregulates its own expression. Plays a role in constitutive splicing and can modulate the selection of alternative splice sites. This Mus musculus (Mouse) protein is Serine/arginine-rich splicing factor 5 (Srsf5).